The following is a 429-amino-acid chain: Zygotic gap protein knirps (429 aa).

Residues 2–78 constitute a DNA-binding region (nuclear receptor); sequence NQTCKVCGEP…VGMSKGGSRY (77 aa). NR C4-type zinc fingers lie at residues 5 to 25 and 42 to 66; these read CKVCGEPAAGFHFGAFTCEGC and CKNEGKCIIDKKNRTTCKACRLRKC. Residues 112–126 show a composition bias toward low complexity; the sequence is SVGGAPSASSPVGSP. Disordered regions lie at residues 112–148, 223–250, 338–357, and 375–397; these read SVGGAPSASSPVGSPHTPGFGDMAAHLHHHHQQQQQQ, QSVDSVESQNRFSPASQPPVVQPTSSAR, TSRSSVHSFNDSGSEDQEVE, and SSSSSSHSAAHSPNTTTAHAEVK. Composition is skewed to polar residues over residues 225-237 and 338-349; these read VDSVESQNRFSPA and TSRSSVHSFNDS. The span at 375 to 393 shows a compositional bias: low complexity; it reads SSSSSSHSAAHSPNTTTAH.

Belongs to the nuclear hormone receptor family. NR0 subfamily.

The protein resides in the nucleus. Transcriptional repressor. Binds to multiple sites in the eve stripe 3 enhancer element. Plays an essential role in the segmentation process both by refining the expression patterns of gap genes and by establishing pair-rules stripes of gene expression. This is Zygotic gap protein knirps (kni) from Drosophila melanogaster (Fruit fly).